A 323-amino-acid polypeptide reads, in one-letter code: MKPKFETVELLSPTGEVVELKVVKRGLAQARPEPVDRNKPAWIKAPLPTGPRYQALKAMVRELRLHTVCQEALCPNIGECWTHGTLTVMILGDICTRACKFCAVHTGNPKGLVDPEEPRRVAEAIARMGVRYVVLTSVDRDDLPDGGASHFAATIRAIKERAPGVLVEALTPDFQGDLKAVETVLAANPEVYAQNLETVRRLTPKVRDPRAGYEQTLKVLAHAKKVRPDILTKSSLMLGLGETEEEILEAMRDLRAAGVDILTLGQYLRPTPAHLPVARYVPPEDFKRYEAWGYELGFREVFAGPLVRSSYRADRVFLEATQR.

Cysteine 69, cysteine 74, cysteine 80, cysteine 95, cysteine 99, cysteine 102, and serine 310 together coordinate [4Fe-4S] cluster. The 219-residue stretch at tryptophan 81–arginine 299 folds into the Radical SAM core domain.

It belongs to the radical SAM superfamily. Lipoyl synthase family. Requires [4Fe-4S] cluster as cofactor.

It is found in the cytoplasm. It catalyses the reaction [[Fe-S] cluster scaffold protein carrying a second [4Fe-4S](2+) cluster] + N(6)-octanoyl-L-lysyl-[protein] + 2 oxidized [2Fe-2S]-[ferredoxin] + 2 S-adenosyl-L-methionine + 4 H(+) = [[Fe-S] cluster scaffold protein] + N(6)-[(R)-dihydrolipoyl]-L-lysyl-[protein] + 4 Fe(3+) + 2 hydrogen sulfide + 2 5'-deoxyadenosine + 2 L-methionine + 2 reduced [2Fe-2S]-[ferredoxin]. It participates in protein modification; protein lipoylation via endogenous pathway; protein N(6)-(lipoyl)lysine from octanoyl-[acyl-carrier-protein]: step 2/2. Its function is as follows. Catalyzes the radical-mediated insertion of two sulfur atoms into the C-6 and C-8 positions of the octanoyl moiety bound to the lipoyl domains of lipoate-dependent enzymes, thereby converting the octanoylated domains into lipoylated derivatives. The sequence is that of Lipoyl synthase from Thermus thermophilus (strain ATCC 27634 / DSM 579 / HB8).